The sequence spans 327 residues: 3' cyclic ADP-D-ribose synthase AaTIR (327 aa).

Residues 10 to 120 form a TIR domain region; that stretch reads VALSFAGENR…GILKTIGYIN (111 aa). Lys229 is a catalytic residue.

As to quaternary structure, homodimer.

It catalyses the reaction NADP(+) + H2O = ADP-D-ribose 2'-phosphate + nicotinamide + H(+). The enzyme catalyses NAD(+) = 3'cADPR + nicotinamide + H(+). In terms of biological role, NAD(+) hydrolase (NADase) that generates 3'cADPR, a cyclization variant of cyclic ADP-D-ribose (also called v2-cADPR). Also cleaves NADP(+), but does not cyclize the product. The chain is 3' cyclic ADP-D-ribose synthase AaTIR from Aquimarina amphilecti.